Reading from the N-terminus, the 134-residue chain is Peroxisomal testis-specific protein 1 (134 aa).

The Microbody targeting signal signature appears at 131–134; it reads NHLL.

The protein localises to the peroxisome. This Homo sapiens (Human) protein is Peroxisomal testis-specific protein 1 (PXT1).